Here is a 136-residue protein sequence, read N- to C-terminus: Membrane-bound negative regulator YvrL (136 aa).

Helical transmembrane passes span 18–38, 46–66, 83–103, and 106–126; these read LLAA…LFSL, AAHV…FEPF, LFIL…AHTT, and LISD…VFLI.

Its subcellular location is the cell membrane. Negatively regulates RNA polymerase sigma factor SigO-dependent transcription. Prevents the expression or secretion of OxdC under nonstress conditions. May act as an anti-sigma factor. The sequence is that of Membrane-bound negative regulator YvrL (yvrL) from Bacillus subtilis (strain 168).